Here is a 104-residue protein sequence, read N- to C-terminus: Large ribosomal subunit protein eL30 (104 aa).

The protein belongs to the eukaryotic ribosomal protein eL30 family.

The polypeptide is Large ribosomal subunit protein eL30 (rpl30e) (Sulfolobus acidocaldarius (strain ATCC 33909 / DSM 639 / JCM 8929 / NBRC 15157 / NCIMB 11770)).